The following is a 103-amino-acid chain: Protein S100-A16 (103 aa).

An EF-hand 1; degenerate domain is found at 12–47 (VVVLVENFYKYVSKHSLVKNKISKSSFRKMLQKELN). The region spanning 54-89 (GNRKAADKLIQNLDANHDGRISFDEYWTLIGGITSP) is the EF-hand 2 domain. 5 residues coordinate Ca(2+): Asp67, Asn69, Asp71, Arg73, and Glu78.

The protein belongs to the S-100 family. In terms of assembly, homodimer. Interacts with TP53.

Its subcellular location is the nucleus. It localises to the nucleolus. It is found in the cytoplasm. In terms of biological role, calcium-binding protein. Binds one calcium ion per monomer. Can promote differentiation of adipocytes (in vitro). Overexpression in preadipocytes increases their proliferation, enhances adipogenesis and reduces insulin-stimulated glucose uptake. This Bos taurus (Bovine) protein is Protein S100-A16 (S100A16).